The primary structure comprises 358 residues: Peptide chain release factor 1 (358 aa).

The residue at position 233 (Gln233) is an N5-methylglutamine.

It belongs to the prokaryotic/mitochondrial release factor family. Methylated by PrmC. Methylation increases the termination efficiency of RF1.

Its subcellular location is the cytoplasm. Its function is as follows. Peptide chain release factor 1 directs the termination of translation in response to the peptide chain termination codons UAG and UAA. The sequence is that of Peptide chain release factor 1 from Brevibacillus brevis (strain 47 / JCM 6285 / NBRC 100599).